The chain runs to 172 residues: Translation initiation factor IF-3 (172 aa).

The protein belongs to the IF-3 family. In terms of assembly, monomer.

The protein resides in the cytoplasm. IF-3 binds to the 30S ribosomal subunit and shifts the equilibrium between 70S ribosomes and their 50S and 30S subunits in favor of the free subunits, thus enhancing the availability of 30S subunits on which protein synthesis initiation begins. This is Translation initiation factor IF-3 from Geobacter sulfurreducens (strain ATCC 51573 / DSM 12127 / PCA).